A 522-amino-acid polypeptide reads, in one-letter code: Transmembrane protein 213R (522 aa).

A run of 2 helical transmembrane segments spans residues Asn-33 to Gly-50 and Ser-55 to Gln-72.

It belongs to the IIV-6 213R family.

It is found in the membrane. The protein is Transmembrane protein 213R of Invertebrate iridescent virus 6 (IIV-6).